We begin with the raw amino-acid sequence, 347 residues long: Probable dual-specificity RNA methyltransferase RlmN (347 aa).

E94 serves as the catalytic Proton acceptor. In terms of domain architecture, Radical SAM core spans 100–334 (TETRTTACVS…AKVRHSRGKD (235 aa)). C107 and C339 are oxidised to a cystine. Positions 114, 118, and 121 each coordinate [4Fe-4S] cluster. S-adenosyl-L-methionine-binding positions include 165-166 (GE), S197, 220-222 (SLH), and N296. Residue C339 is the S-methylcysteine intermediate of the active site.

It belongs to the radical SAM superfamily. RlmN family. It depends on [4Fe-4S] cluster as a cofactor.

Its subcellular location is the cytoplasm. The enzyme catalyses adenosine(2503) in 23S rRNA + 2 reduced [2Fe-2S]-[ferredoxin] + 2 S-adenosyl-L-methionine = 2-methyladenosine(2503) in 23S rRNA + 5'-deoxyadenosine + L-methionine + 2 oxidized [2Fe-2S]-[ferredoxin] + S-adenosyl-L-homocysteine. It catalyses the reaction adenosine(37) in tRNA + 2 reduced [2Fe-2S]-[ferredoxin] + 2 S-adenosyl-L-methionine = 2-methyladenosine(37) in tRNA + 5'-deoxyadenosine + L-methionine + 2 oxidized [2Fe-2S]-[ferredoxin] + S-adenosyl-L-homocysteine. In terms of biological role, specifically methylates position 2 of adenine 2503 in 23S rRNA and position 2 of adenine 37 in tRNAs. The polypeptide is Probable dual-specificity RNA methyltransferase RlmN (Flavobacterium psychrophilum (strain ATCC 49511 / DSM 21280 / CIP 103535 / JIP02/86)).